The primary structure comprises 454 residues: N-myc 2 proto-oncogene protein (454 aa).

3 disordered regions span residues 132 to 166 (SEKMQHGHEPAATGPATQVPGAGAASPAGRGHSGT), 230 to 269 (VAAPPGLSSRPPNGGDHKVLSTSGEDALSDEVDEEEDEEE), and 325 to 374 (PSPY…VRRR). Residues 151–161 (PGAGAASPAGR) show a composition bias toward low complexity. Positions 256–269 (ALSDEVDEEEDEEE) are enriched in acidic residues. Over residues 363-374 (RKSDSEDSVRRR) the composition is skewed to basic and acidic residues. Residues 371–423 (VRRRNHNILERQRRNDLRSSFTTLRDHVPELVKNEKAAKVVILKKACEYVHYL) enclose the bHLH domain. Residues 423–444 (LQAKEHQLLMEKEKLQARQQQL) are leucine-zipper.

In terms of assembly, efficient DNA binding requires dimerization with another bHLH protein.

The protein localises to the nucleus. The polypeptide is N-myc 2 proto-oncogene protein (N-MYC2) (Marmota monax (Woodchuck)).